Consider the following 184-residue polypeptide: Cytochrome c homolog (184 aa).

At 1 to 10 (MDSFELNKIL) the chain is on the cytoplasmic side. Residues 11 to 31 (GAVLGTCLILLVTSFTANALF) traverse the membrane as a helical; Signal-anchor segment. At 32–184 (SPKMPEKPGF…HPKPLPTASK (153 aa)) the chain is on the periplasmic side. Cys84, Cys87, His88, and Met151 together coordinate heme c.

It belongs to the cytochrome c family. Binds 1 heme c group covalently per subunit.

Its subcellular location is the cell membrane. Functionally, may be involved in electron transfer from bc1 complex to aa3. The protein is Cytochrome c homolog (cycM) of Bradyrhizobium diazoefficiens (strain JCM 10833 / BCRC 13528 / IAM 13628 / NBRC 14792 / USDA 110).